The sequence spans 65 residues: Disintegrin CC5 (65 aa).

In terms of domain architecture, Disintegrin spans Met-1 to Ser-65. 4 cysteine pairs are disulfide-bonded: Cys-7–Cys-30, Cys-21–Cys-27, Cys-26–Cys-51, and Cys-39–Cys-58. A Cell attachment site motif is present at residues Arg-43–Asp-45.

Belongs to the disintegrin family. Dimeric disintegrin subfamily. As to quaternary structure, homodimer; disulfide-linked. Expressed by the venom gland.

The protein localises to the secreted. Functionally, binds and inhibits integrins alpha-IIb/beta-3 (ITGA2B/ITGB3), alpha-V/beta-3 (ITGAV/ITGB3) and alpha-5/beta-1 (ITGA5/ITGB1). The polypeptide is Disintegrin CC5 (Cerastes cerastes (Horned desert viper)).